The sequence spans 393 residues: Formate-dependent phosphoribosylglycinamide formyltransferase (393 aa).

Residues 22–23 and Glu82 contribute to the N(1)-(5-phospho-beta-D-ribosyl)glycinamide site; that span reads EL. Residues Arg114, Lys155, 160-165, 195-198, and Glu203 contribute to the ATP site; these read SSGHGQ and EGFI. In terms of domain architecture, ATP-grasp spans 119 to 308; sequence RLAAEELGLP…QFALHARAIL (190 aa). 2 residues coordinate Mg(2+): Glu267 and Glu279. Residues Asp286, Lys356, and 363-364 contribute to the N(1)-(5-phospho-beta-D-ribosyl)glycinamide site; that span reads RR.

Belongs to the PurK/PurT family. Homodimer.

The enzyme catalyses N(1)-(5-phospho-beta-D-ribosyl)glycinamide + formate + ATP = N(2)-formyl-N(1)-(5-phospho-beta-D-ribosyl)glycinamide + ADP + phosphate + H(+). Its pathway is purine metabolism; IMP biosynthesis via de novo pathway; N(2)-formyl-N(1)-(5-phospho-D-ribosyl)glycinamide from N(1)-(5-phospho-D-ribosyl)glycinamide (formate route): step 1/1. Its function is as follows. Involved in the de novo purine biosynthesis. Catalyzes the transfer of formate to 5-phospho-ribosyl-glycinamide (GAR), producing 5-phospho-ribosyl-N-formylglycinamide (FGAR). Formate is provided by PurU via hydrolysis of 10-formyl-tetrahydrofolate. This is Formate-dependent phosphoribosylglycinamide formyltransferase from Haemophilus ducreyi (strain 35000HP / ATCC 700724).